A 1055-amino-acid polypeptide reads, in one-letter code: DNA-directed RNA polymerase subunit beta' (1055 aa).

4 residues coordinate Zn(2+): Cys60, Cys62, Cys75, and Cys78. Residues Asp449, Asp451, and Asp453 each contribute to the Mg(2+) site. Residues Cys818, Cys892, Cys899, and Cys902 each coordinate Zn(2+).

This sequence belongs to the RNA polymerase beta' chain family. The RNAP catalytic core consists of 2 alpha, 1 beta, 1 beta' and 1 omega subunit. When a sigma factor is associated with the core the holoenzyme is formed, which can initiate transcription. It depends on Mg(2+) as a cofactor. Zn(2+) is required as a cofactor.

The catalysed reaction is RNA(n) + a ribonucleoside 5'-triphosphate = RNA(n+1) + diphosphate. Its function is as follows. DNA-dependent RNA polymerase catalyzes the transcription of DNA into RNA using the four ribonucleoside triphosphates as substrates. The polypeptide is DNA-directed RNA polymerase subunit beta' (Pediococcus acidilactici).